A 144-amino-acid chain; its full sequence is Large ribosomal subunit protein uL13 (144 aa).

Belongs to the universal ribosomal protein uL13 family. As to quaternary structure, part of the 50S ribosomal subunit.

Functionally, this protein is one of the early assembly proteins of the 50S ribosomal subunit, although it is not seen to bind rRNA by itself. It is important during the early stages of 50S assembly. This is Large ribosomal subunit protein uL13 from Natronomonas pharaonis (strain ATCC 35678 / DSM 2160 / CIP 103997 / JCM 8858 / NBRC 14720 / NCIMB 2260 / Gabara) (Halobacterium pharaonis).